The chain runs to 2198 residues: MDEKVFVLKDFIRRQVPDIPELSYQKEALLSQVEVPMVLTEGFKLLSCLVEIESCRKNSCECNFEQKFVDTILSENGVVAPTLPKVIPDGYRFFNKTLILLETFVRVNPEEFEKKWKTDMAKLLSLKEDIHRTGITLVPVVDGRGNYNTDLLPDWATERFRWLLIDLLRESRGAPTMEIEDQEYHRLIHSLSKTSNQSLGFENIECLKRVHLNYEERLNEQLLKDIVGEVRESKIREELIKLKTWYREEIYRKGLGNFVQTDRKSLLQTLVLSSAHSDSLAPECPMCCSKILDLCYQLSMRIANQTSLENNFDEPPLPTTQIEKVYLSLLSACNKIKGKKVFNTRRNTLLFLDLIILNFVAHVYKTQPSEMETLKKAGLIIGEMLLLPNDRVLDILVARRLLLKKVESCCNWLDRCRHLLRKEEPVLWDCVSEFTNVPDFELLLSLAEELCSEKPVMHYKPPSSLIGDCAHKDLMSMSDGEFESLFKCLSHISLSLVNSMKTSFSSRLLVNEKDYKRYYGTVRLKECYVQRFFLRVGLYGLLFYQKTGEKSRCYSLYLSDKGNLVELGSFYSDPKRFFLPIFSEFVLLATCAEMLSWLDFDEKLVDAVTPLLKILVLSILSSPTKRSQTFLQGLRYFIMAYVNQAHHIQLMSKLAVECKSASDVLIQRLSVKIVDMVLSDGSDPDMHMTRKFKFVLNVSYLCHLITKETPDRLTDQIKCFEKFMEPKLEFGSLIVNPSLNGFLSKEQEDVMIEGVEKFFSKELLTVEDLKRPGVSRELLSYCVSLFNKGRLRVNGTLGTDPYRPSFTSTALDLSSNKSVVIPKLNEVGEIVSEYDKQKLVSTCITSMAERFKTKGRYNLDPDTIDFLIMRNLTNLLSARKLDSSKKEELSLLYEHLSEDVMKAFEEIKYEVEITLSKMRLSRELECGHKKPCTLEGVWAPFNVLKVIRSETSVHEIRDFDPDLLGEDVYEKLCVAVYDSPLRPTFFLEKPLDICPLELLLKNLTTKSYEDDEFFDCFKYILIQAGFDQRLGAYEHKNRSRLGLSEEAFRLKEDVRVSNRQSNSEAIADRLDKSFFTSAALRNLCFYSEESPTEYTCISPNVGNLKFGLSYKEQVGSNRELYVGDLNTKMMTRLVEDFTEAVANSMNYTCLNSEKEFERAICDMKMAVNNGDLCCSLDHSKWGPFMSPALFHAFFGALKFKISKTGEQVDLGPVLNVLKWHLHKAVEVPISVAEAYCTGMLKRRLGLMSLSCQSVCEEFFHQKLLLEEGVPSHIMSVLDMGQGILHNSSDLYGLITEQFINYCLDFLFDVIPVSYTSSDDQITTFKLPTMSSSEDGLDGFDWLELLCFHDFLSSKFNKFVSPKSVSGTFVAEFKSRFFVMGEETPLLTKFVSAALHNVKCKTPTQLAETIDTICDQCVANGVGIEIVTKISERVNRLIRYSGYPQTPFLAVEKQDVKDWTDGSRGYRLQRNIEHYLQGSEQLEFVRKCAKKVLLKIKKGQVFEEYLVQLIGKDGDDALKGFLSYAGCESDEIKDVLKYRWLNLSANGDLRLVLRTKLMSTRRVLEREQIPTLIKTLQSKLSKNFTKGVKKILAESINKSAFQSSVASGFIGFCKSMGSKCVRDGSGGFMYIREVLNKQRVCPCEICAQNPGIIFCSDALTLIPEFSRSILWDYFSLVLTNACELGEWVFSSVQPPKVPILLNNPNLFWAVKPRGTRLIEDQLGLGHVLQSVRRSYPKVFEEHLVPFMNDLQVSRTTDFTRLRYLDVCVALDMMNENLGIVSHLLKAKDNSIYIVKQSECAVAHIRQVEYVNQELGLSPQQICSNFKIQLVFSSMINPLVITTSVLKSFFWFNEVLNLEDESQIDVGELTDFTILIKKYNLNRAMMLDDLTMGYVVSTISEPTIHLVSLKRNSNSIVGEQNSEMLHGEQVEDMYSIVLHIQLEHKRHSTKYHLSRTVVYSYTVECETNITDIEKEPSLATVKNVVLRASGSIEGHQFLDGVNLVASQPIFTGKKVINLSELLADSEITETYKEGDAVGSILLNFGTFYEHIDDRYAYEIVGPECSDSPLVLDGGSILADGKKLSSIKVELTGDVILKALGALESEKEVQSLLTGLWPFIRINNLKVKMAQEDFLLMYEMHRESLLKSLEVFSEWCEFVDFSVCYSKSLRDLVISDSSGSLRLKGITCKPINLSNSVTEIE.

The interval 26–284 is endonuclease; it reads KEALLSQVEV…AHSDSLAPEC (259 aa). Residues Glu51, Asp89, and Glu102 each contribute to the Mn(2+) site. Lys115 is a catalytic residue. The region spanning 1161–1359 is the RdRp catalytic domain; that stretch reads CDMKMAVNNG…FLSSKFNKFV (199 aa). Asp1319 lines the Mg(2+) pocket.

The protein belongs to the Bunyavirales RNA polymerase family. As to quaternary structure, homomultimer; the oligomeric structure is essential for the polymerase activity. Interacts with nucleoprotein N. Interacts with protein Z; this interaction inhibits viral transcription and replication, Z partially blocks the product exit tunnel for the releasing nascent RNA product. Mn(2+) is required as a cofactor. Mg(2+) serves as cofactor.

The protein resides in the virion. It is found in the host cytoplasm. It catalyses the reaction RNA(n) + a ribonucleoside 5'-triphosphate = RNA(n+1) + diphosphate. Functionally, RNA-dependent RNA polymerase, which is responsible for the replication and transcription of the viral RNA genome using antigenomic RNA as an intermediate. During transcription, synthesizes subgenomic RNAs and assures their capping by a cap-snatching mechanism, which involves the endonuclease activity cleaving the host capped pre-mRNAs. These short capped RNAs are then used as primers for viral transcription. The 3'-end of subgenomic mRNAs molecules are heterogeneous and not polyadenylated. The replicase function is to direct synthesis of antigenomic and genomic RNA which are encapsidated and non capped. As a consequence of the use of the same enzyme for both transcription and replication, these mechanisms need to be well coordinated. These processes may be regulated by proteins N and Z in a dose-dependent manner. Z protein inhibits the viral polymerase L und thus the viral transcription and RNA synthesis. The polypeptide is RNA-directed RNA polymerase L (Homo sapiens (Human)).